The sequence spans 610 residues: Estrogen receptor beta-2 (610 aa).

Positions 1–170 are modulating; the sequence is MSSSTGPAPA…GILGKGDTHF (170 aa). 2 consecutive NR C4-type zinc fingers follow at residues 171–191 and 207–231; these read CAVCHDYASGYHYGVWSCEGC and CPATNQCTIDKSRRKSCQACRLRKC. A DNA-binding region (nuclear receptor) is located at residues 171–236; the sequence is CAVCHDYASG…RLRKCYEVGM (66 aa). The NR LBD domain maps to 302–538; sequence SPEQLVNCIL…DLLLEMLDAN (237 aa). A disordered region spans residues 566–596; sequence HTSKQQPALKESNQDTRHSPQAEGTVDKTLH. Residues 577–596 show a composition bias toward basic and acidic residues; sequence SNQDTRHSPQAEGTVDKTLH.

Belongs to the nuclear hormone receptor family. NR3 subfamily. As to quaternary structure, binds DNA as a homodimer. Can form a heterodimer with ER-alpha. Predominantly expressed in pituitary, telencephalon and hypothalamus as well as in the liver.

The protein localises to the nucleus. Functionally, binds estrogens with an affinity similar to that of ER-alpha, and activates expression of reporter genes containing estrogen response elements (ERE) in an estrogen-dependent manner. This Carassius auratus (Goldfish) protein is Estrogen receptor beta-2 (esr2b).